Consider the following 318-residue polypeptide: Ubiquitin-like domain-containing CTD phosphatase 1 (318 aa).

A Ubiquitin-like domain is found at 3-81 (LSLIIKWGGQ…IMMMGTREES (79 aa)). In terms of domain architecture, FCP1 homology spans 133–294 (PREGKKLLVL…LKLSQYLKEI (162 aa)). Mg(2+) is bound by residues aspartate 143, aspartate 145, and aspartate 253.

It depends on Mg(2+) as a cofactor.

It localises to the nucleus. The catalysed reaction is O-phospho-L-seryl-[protein] + H2O = L-seryl-[protein] + phosphate. It catalyses the reaction O-phospho-L-threonyl-[protein] + H2O = L-threonyl-[protein] + phosphate. Its function is as follows. Dephosphorylates 26S nuclear proteasomes, thereby decreasing their proteolytic activity. Recruited to the 19S regulatory particle of the 26S proteasome where it dephosphorylates 19S component psmc2 which impairs psmc2 ATPase activity and disrupts 26S proteasome assembly. Has also been reported to stimulate the proteolytic activity of the 26S proteasome. The polypeptide is Ubiquitin-like domain-containing CTD phosphatase 1 (ublcp1) (Xenopus tropicalis (Western clawed frog)).